The primary structure comprises 419 residues: Tyrosine--tRNA ligase (419 aa).

Tyrosine 42 contacts L-tyrosine. The short motif at 47-56 is the 'HIGH' region element; sequence ATAPSLHVGS. L-tyrosine-binding residues include tyrosine 179 and glutamine 183. The 'KMSKS' region motif lies at 239-243; that stretch reads KMGKT. Lysine 242 provides a ligand contact to ATP. Residues 353 to 418 enclose the S4 RNA-binding domain; sequence IVLANLFADA…GKKKIVLVKP (66 aa).

It belongs to the class-I aminoacyl-tRNA synthetase family. TyrS type 1 subfamily. Homodimer.

Its subcellular location is the cytoplasm. It carries out the reaction tRNA(Tyr) + L-tyrosine + ATP = L-tyrosyl-tRNA(Tyr) + AMP + diphosphate + H(+). Functionally, catalyzes the attachment of tyrosine to tRNA(Tyr) in a two-step reaction: tyrosine is first activated by ATP to form Tyr-AMP and then transferred to the acceptor end of tRNA(Tyr). The protein is Tyrosine--tRNA ligase of Caulobacter sp. (strain K31).